Consider the following 365-residue polypeptide: Probable 7-methylxanthine methyltransferase PCS2 (365 aa).

S-adenosyl-L-homocysteine is bound at residue Y19. T26 lines the theobromine pocket. 5 residues coordinate S-adenosyl-L-homocysteine: C62, D99, L100, S134, and F135. Theobromine-binding residues include Y152, H155, and W156. N173 is a binding site for Mg(2+). R221 is a theobromine binding site. Residues D259, F261, and N262 each contribute to the Mg(2+) site.

Belongs to the methyltransferase superfamily. Type-7 methyltransferase family. The cofactor is Mg(2+).

It catalyses the reaction 7-methylxanthine + S-adenosyl-L-methionine = theobromine + S-adenosyl-L-homocysteine + H(+). In terms of biological role, no detectable N-methyltransferase activity. This Camellia ptilophylla (Cocoa tea) protein is Probable 7-methylxanthine methyltransferase PCS2.